Reading from the N-terminus, the 137-residue chain is Venom allergen 4 (137 aa).

The N-terminal stretch at 1–19 (MKTFVLVSCLLVFTQIIYA) is a signal peptide.

It belongs to the ant venom allergen 2/4 family. In terms of assembly, monomer. In terms of tissue distribution, expressed by the venom gland.

The protein localises to the secreted. The sequence is that of Venom allergen 4 from Solenopsis geminata (Tropical fire ant).